The following is a 680-amino-acid chain: DNA-directed RNA polymerase subunit beta' (680 aa).

The Zn(2+) site is built by cysteine 69, cysteine 71, cysteine 87, and cysteine 90. Residues aspartate 489, aspartate 491, and aspartate 493 each contribute to the Mg(2+) site.

This sequence belongs to the RNA polymerase beta' chain family. RpoC1 subfamily. As to quaternary structure, in plastids the minimal PEP RNA polymerase catalytic core is composed of four subunits: alpha, beta, beta', and beta''. When a (nuclear-encoded) sigma factor is associated with the core the holoenzyme is formed, which can initiate transcription. The cofactor is Mg(2+). It depends on Zn(2+) as a cofactor.

The protein resides in the plastid. It localises to the chloroplast. The catalysed reaction is RNA(n) + a ribonucleoside 5'-triphosphate = RNA(n+1) + diphosphate. DNA-dependent RNA polymerase catalyzes the transcription of DNA into RNA using the four ribonucleoside triphosphates as substrates. The polypeptide is DNA-directed RNA polymerase subunit beta' (Nandina domestica (Heavenly bamboo)).